A 576-amino-acid polypeptide reads, in one-letter code: MNIQAFLSEKISMAMSAAGAPADSEPLVRQSAKVQFGDYQANGVMGAAKKMGIPPRQLAEKILEHLDITDIADKVEIAGPGFINIFLSPVWVAQQAEFALADEHLNITKVTPETIVIDYSSPNVAKQMHVGHLRSTIIGDASARTLSFLGHNVIRANHLGDWGTQFGMLIAYLEKKQNENAADMALADLEEFYREAKKCYDEDEVFAERARNYVVRLQGGDEYCRTMWRKLVDITMQQNQLTYQRLNVTLTEDDIMGESLYNPMLPGIVADLKAKGLAVESEGATVVFLDEYKNKEGEPMGVIIQKKDGGYLYTTTDIACAKYRHEQLHANRVLYYIDSRQHQHLMQAWTIVRKAGYIPDSMSLEHHMFGMMLGKDGRPFKTRSGGTVRLTDLLDEAHERALTLIREKNPDMDEEELNNIARVVGIGAVKYADLSKNRTTDYIFDWDLMLSFEGNTAPYMQYAYTRVASIFKRADIDESALTQPISLTQPHEKQLALRLVQFDETITQVAREGTPHVMCAYLYDLAQSFSGFYENCPILSAEDDNVRQSRLKLARLTARTLKQGLETLGIETVDRM.

The short motif at Pro-122 to His-132 is the 'HIGH' region element.

It belongs to the class-I aminoacyl-tRNA synthetase family. As to quaternary structure, monomer.

The protein resides in the cytoplasm. It carries out the reaction tRNA(Arg) + L-arginine + ATP = L-arginyl-tRNA(Arg) + AMP + diphosphate. This chain is Arginine--tRNA ligase, found in Proteus mirabilis (strain HI4320).